Here is a 506-residue protein sequence, read N- to C-terminus: MEKFQSYLGLDRSQQHHFLYPLIFQEYIYVLAHDHGLTRSILLENAGYDNKSSLLIVKRLINRMYQQNHLILSVNNSKQTPFLGHNKNFYSQVMSEVSSIIMEIPLSLRLISYLERKGVVKSDNLRSIHSIFSFLEDNFSHLNYVLDILIPYPAHLEILVQALRYWIKDASSLHLLRFFLHECHNWDSLITSNSKKASSSFSKRNHRLFFFLYTSHLCEYESGFLFLRNQSSHLRSTSSGALIERIYFYGKIDHLAEVFARAFQANLWLFKDPFMHYVRYQGKSILGSKGTFLLMNKWKYYFVNFWKSYFYLWSQPGRIYINQLSNHSLDFLGYRSSVRLKPSMVRSQMLENAFIIENAIKKFETIVPIMPLIGSLAKSKFCNALGHPIGKAIWADFSDSDIIDRFGRIYRNLSHYHSGSSKKKSLYRVKYILRLSCARTLARKHKSTVRAFLKRFGSELLEEFFTEEEQVFSLTFPRVSSISRRLSRRRIWYLDIICINDLANHE.

The protein belongs to the intron maturase 2 family. MatK subfamily.

It localises to the plastid. Its subcellular location is the chloroplast. Usually encoded in the trnK tRNA gene intron. Probably assists in splicing its own and other chloroplast group II introns. This chain is Maturase K, found in Lactuca sativa (Garden lettuce).